The sequence spans 556 residues: Formate--tetrahydrofolate ligase (556 aa).

An ATP-binding site is contributed by 65-72 (TPAGEGKT).

This sequence belongs to the formate--tetrahydrofolate ligase family.

It carries out the reaction (6S)-5,6,7,8-tetrahydrofolate + formate + ATP = (6R)-10-formyltetrahydrofolate + ADP + phosphate. The protein operates within one-carbon metabolism; tetrahydrofolate interconversion. This is Formate--tetrahydrofolate ligase from Acetivibrio thermocellus (strain ATCC 27405 / DSM 1237 / JCM 9322 / NBRC 103400 / NCIMB 10682 / NRRL B-4536 / VPI 7372) (Clostridium thermocellum).